Consider the following 397-residue polypeptide: Lysophospholipid transporter LplT (397 aa).

A run of 11 helical transmembrane segments spans residues 21 to 41 (SAQF…LALL), 53 to 73 (ILQM…GQVA), 91 to 111 (LGAA…LVGI), 139 to 159 (LMES…GVLA), 164 to 184 (LAAL…NLFI), 229 to 249 (WGAG…ALGI), 257 to 277 (YLNA…AKLV), 281 to 301 (TVRR…FFSL), 304 to 324 (ALLP…FFIV), 344 to 364 (IAVQ…LYSL), and 372 to 392 (VVGI…GLWI).

It belongs to the major facilitator superfamily. LplT (TC 2.A.1.42) family.

It localises to the cell inner membrane. Functionally, catalyzes the facilitated diffusion of 2-acyl-glycero-3-phosphoethanolamine (2-acyl-GPE) into the cell. The sequence is that of Lysophospholipid transporter LplT from Enterobacter sp. (strain 638).